The primary structure comprises 926 residues: G-protein coupled receptor family C group 6 member A (926 aa).

The first 18 residues, 1–18 (MAFLIILITCFVIILATS), serve as a signal peptide directing secretion. Residues 19-594 (QPCQTPDDFV…EYLNWNDSLA (576 aa)) lie on the Extracellular side of the membrane. Residues asparagine 121, asparagine 259, asparagine 332, asparagine 378, asparagine 452, asparagine 555, asparagine 567, and asparagine 590 are each glycosylated (N-linked (GlcNAc...) asparagine). A helical transmembrane segment spans residues 595–615 (ILLLILSLLGIIFVLVVGIIF). Over 616–631 (TRNLNTPVVKSSGGLR) the chain is Cytoplasmic. A helical transmembrane segment spans residues 632-652 (VCYVILLCHFLNFASTSFFIG). Residues 653 to 669 (EPQDFTCKTRQTMFGVS) are Extracellular-facing. The helical transmembrane segment at 670–690 (FTLCISCILTKSLKILLAFSF) threads the bilayer. Topologically, residues 691–704 (DPKLQKFLKCLYRP) are cytoplasmic. A helical membrane pass occupies residues 705–725 (ILIIFTCTGIQVVICTLWLIF). Residues 726-748 (AAPTVEVNVSLPRVIILECEEGS) lie on the Extracellular side of the membrane. The N-linked (GlcNAc...) asparagine glycan is linked to asparagine 733. Residues 749-769 (ILAFGTMLGYIAILAFICFIF) form a helical membrane-spanning segment. At 770–782 (AFKGKYENYNEAK) the chain is on the cytoplasmic side. Residues 783–803 (FITFGMLIYFIAWITFIPIYA) form a helical membrane-spanning segment. The Extracellular segment spans residues 804–810 (TTFGKYV). A helical membrane pass occupies residues 811–831 (PAVEIIVILISNYGILYCTFI). Residues 832-926 (PKCYVIICKQ…TLPRKRMSSI (95 aa)) are Cytoplasmic-facing.

This sequence belongs to the G-protein coupled receptor 3 family. As to quaternary structure, homodimer; disulfide-linked. As to expression, isoform 1 is expressed at high level in brain, skeletal muscle, testis, bone, calvaria, osteoblasts and leukocytes. Expressed at intermediate level in liver, heart, kidney and spleen. Expressed at low level in lung, pancreas, placenta and ovary. Not detected in thymus, prostate, small intestine, tongue and colon. Isoform 1 and isoform 2 are expressed in kidney at the same level. Isoform 2 is expressed at lower level than isoform 1 in the other tissues.

Its subcellular location is the cell membrane. Its function is as follows. Receptor activated by multiple ligands, including osteocalcin (BGLAP), basic amino acids, and various cations. Activated by amino acids with a preference for basic amino acids such as L-Lys, L-Arg and L-ornithine but also by small and polar amino acids. The L-alpha amino acids respond is augmented by divalent cations Ca(2+) and Mg(2+). Seems to act through a G(q)/G(11) and G(i)-coupled pathway. Regulates testosterone production by acting as a ligand for uncarboxylated osteocalcin hormone: osteocalcin-binding at the surface of Leydig cells initiates a signaling response that promotes the expression of enzymes required for testosterone synthesis in a CREB-dependent manner. Mediates the non-genomic effects of androgens in multiple tissue. May coordinate nutritional and hormonal anabolic signals through the sensing of extracellular amino acids, osteocalcin, divalent ions and its responsiveness to anabolic steroids. The protein is G-protein coupled receptor family C group 6 member A (GPRC6A) of Homo sapiens (Human).